A 219-amino-acid polypeptide reads, in one-letter code: Translation initiation factor IF-3 (219 aa).

Belongs to the IF-3 family. Monomer.

Its subcellular location is the cytoplasm. IF-3 binds to the 30S ribosomal subunit and shifts the equilibrium between 70S ribosomes and their 50S and 30S subunits in favor of the free subunits, thus enhancing the availability of 30S subunits on which protein synthesis initiation begins. The sequence is that of Translation initiation factor IF-3 from Prochlorococcus marinus (strain MIT 9303).